The following is a 75-amino-acid chain: Transcription attenuation protein MtrB (75 aa).

Belongs to the MtrB family. Oligomer of 11 identical subunits arranged in doughnut-like structure.

Functionally, required for transcription attenuation control in the trp operon. This trans-acting factor binds to trinucleotide repeats (GAG or UAG) located in the trp leader transcript causing transcription termination. Binds the leader RNA only in presence of L-tryptophan. This Bacillus subtilis (strain 168) protein is Transcription attenuation protein MtrB (mtrB).